Consider the following 143-residue polypeptide: Transcription antitermination protein NusB (143 aa).

It belongs to the NusB family.

In terms of biological role, involved in transcription antitermination. Required for transcription of ribosomal RNA (rRNA) genes. Binds specifically to the boxA antiterminator sequence of the ribosomal RNA (rrn) operons. The sequence is that of Transcription antitermination protein NusB from Buchnera aphidicola subsp. Acyrthosiphon pisum (strain APS) (Acyrthosiphon pisum symbiotic bacterium).